The primary structure comprises 221 residues: uncharacterized protein (221 aa).

5 helical membrane-spanning segments follow: residues 2–22 (FIAK…FFFV), 34–54 (LLTL…LAQA), 97–117 (AYGL…SNVI), 131–151 (ALDQ…FMGI), and 177–197 (ILWP…LQVI).

This sequence belongs to the peroxisomal membrane protein PXMP2/4 family.

It localises to the membrane. This is an uncharacterized protein from Schizosaccharomyces pombe (strain 972 / ATCC 24843) (Fission yeast).